A 508-amino-acid polypeptide reads, in one-letter code: Mu-like prophage FluMu protein gp28 (508 aa).

It to phage Mu protein gp28.

In Haemophilus influenzae (strain ATCC 51907 / DSM 11121 / KW20 / Rd), this protein is Mu-like prophage FluMu protein gp28.